Reading from the N-terminus, the 280-residue chain is Mastin (280 aa).

The N-terminal stretch at M1 to S15 is a signal peptide. The propeptide occupies V16–G30. In terms of domain architecture, Peptidase S1 spans I31–P275. A disulfide bridge connects residues C62 and C78. Residue H77 is the Charge relay system of the active site. N106 and N117 each carry an N-linked (GlcNAc...) asparagine glycan. D127 (charge relay system) is an active-site residue. Intrachain disulfides connect C161–C234, C194–C215, and C224–C252. S228 serves as the catalytic Charge relay system.

The protein belongs to the peptidase S1 family. In terms of assembly, oligomer; disulfide-linked. In terms of processing, N-glycosylated. Mononuclear cells within skin, intestine, trachea and lung parenchyma, and polymorphonuclear leukocytes within capillaries and blood.

It localises to the cytoplasm. Inhibited by leupeptin and bis(5-amidino-2-benzimidazolyl)methane (BABIM). In terms of biological role, trypsin-like serine protease. Has a preference for extended substrates with basic residues at the P1 position; Arg is preferred over Lys. Active towards calcitonin gene-related peptide and gelatin. Not active towards substance P, vasoactive intestinal peptide, type I collagen or azocasein. The chain is Mastin from Canis lupus familiaris (Dog).